We begin with the raw amino-acid sequence, 336 residues long: NADH-quinone oxidoreductase subunit H (336 aa).

8 helical membrane-spanning segments follow: residues 12 to 32, 84 to 104, 118 to 138, 156 to 176, 193 to 213, 247 to 267, 274 to 294, and 313 to 333; these read FLKIVIVFSLALGIGAYLTWF, VVMALVPSILLLTIIPFGPGF, VNIALLLAFAFGSLSVYGTIF, AAVVIAYEVVLGFSVLGVILL, GVWFIFYQPVAFILYLFCMLA, LAEWYVNVIALSAIAVVLFFG, IFGPLSPYFWFVFKTFALVFF, and IAWKILLPIAILNVIITAVVV.

The protein belongs to the complex I subunit 1 family. In terms of assembly, NDH-1 is composed of 14 different subunits. Subunits NuoA, H, J, K, L, M, N constitute the membrane sector of the complex.

It is found in the cell inner membrane. The enzyme catalyses a quinone + NADH + 5 H(+)(in) = a quinol + NAD(+) + 4 H(+)(out). Its function is as follows. NDH-1 shuttles electrons from NADH, via FMN and iron-sulfur (Fe-S) centers, to quinones in the respiratory chain. The immediate electron acceptor for the enzyme in this species is believed to be ubiquinone. Couples the redox reaction to proton translocation (for every two electrons transferred, four hydrogen ions are translocated across the cytoplasmic membrane), and thus conserves the redox energy in a proton gradient. This subunit may bind ubiquinone. This Aquifex aeolicus (strain VF5) protein is NADH-quinone oxidoreductase subunit H.